Reading from the N-terminus, the 452-residue chain is Neuronal acetylcholine receptor subunit alpha-5 (452 aa).

An N-terminal signal peptide occupies residues 1 to 27 (MVQLLAGRWRPTGARRGTRGGLPELSS). Over 28–239 (AAKHEDSLFR…VIKRLPLFYT (212 aa)) the chain is Extracellular. Asn-140, Asn-168, and Asn-214 each carry an N-linked (GlcNAc...) asparagine glycan. A disulfide bond links Cys-155 and Cys-169. Cys-219 and Cys-220 are disulfide-bonded. 3 helical membrane-spanning segments follow: residues 240-260 (LFLIIPCIGLSFLTVVVFYLP), 269-289 (LCTSVLVSLTVFLLVIEEIIP), and 302-322 (LVFTMIFVTLSIMVTVFAINI). Topologically, residues 323 to 414 (HHRSSSTHNA…KFIAQVLDRM (92 aa)) are cytoplasmic. Residues 415–435 (FLWTFLLVSIIGTLGLFVPVI) traverse the membrane as a helical segment. The Extracellular portion of the chain corresponds to 436 to 452 (YKWANIIVPVHIGNTIK).

This sequence belongs to the ligand-gated ion channel (TC 1.A.9) family. Acetylcholine receptor (TC 1.A.9.1) subfamily. Alpha-5/CHRNA5 sub-subfamily. In terms of assembly, neuronal AChR that forms heteropentamers composed of two different type of subunits: alpha and non-alpha (beta). CHRNA5/alpha-5 subunit is only able to form functional nAChRs when co-assembled with another alpha subunit, can be combined to CHRNA4/alpha-4 or CHRNA3/alpha-3 and CHRNB4/beta-4 or CHRNB2/beta-2 to give rise to functional receptors. Interacts with LYPD6.

The protein localises to the synaptic cell membrane. The protein resides in the cell membrane. The catalysed reaction is Ca(2+)(in) = Ca(2+)(out). The enzyme catalyses K(+)(in) = K(+)(out). It catalyses the reaction Na(+)(in) = Na(+)(out). With respect to regulation, activated by a myriad of ligands such as acetylcholine, cytisine, nicotine, choline and epibatidine. In terms of biological role, component of neuronal acetylcholine receptors (nAChRs) that function as pentameric, ligand-gated cation channels with high calcium permeability among other activities. nAChRs are excitatory neurotrasnmitter receptors formed by a collection of nAChR subunits known to mediate synaptic transmission in the nervous system and the neuromuscular junction. Each nAchR subunit confers differential attributes to channel properties, including activation, deactivation and desensitization kinetics, pH sensitivity, cation permeability, and binding to allosteric modulators. Has an accessory rather than functional role and is only able to form functional nAChRs when co-assembled with another beta subunit. Participates in pentameric assemblies along with CHRNA3, CHRNA4, CHRNB2 and CHRNB4. Increases receptor sensitivity to acetylcholine and nicotine when associated with CHRNA4 and CHRNB2. Plays a role in nicotine addiction. This is Neuronal acetylcholine receptor subunit alpha-5 (Chrna5) from Rattus norvegicus (Rat).